Here is a 132-residue protein sequence, read N- to C-terminus: Ribosome-binding factor A (132 aa).

It belongs to the RbfA family. As to quaternary structure, monomer. Binds 30S ribosomal subunits, but not 50S ribosomal subunits or 70S ribosomes.

Its subcellular location is the cytoplasm. One of several proteins that assist in the late maturation steps of the functional core of the 30S ribosomal subunit. Associates with free 30S ribosomal subunits (but not with 30S subunits that are part of 70S ribosomes or polysomes). Required for efficient processing of 16S rRNA. May interact with the 5'-terminal helix region of 16S rRNA. The chain is Ribosome-binding factor A from Prochlorococcus marinus (strain MIT 9515).